The sequence spans 221 residues: Glutathione S-transferase alpha-3 (221 aa).

Residues 3–83 (GKPVLHYFDG…YIATKYNLYG (81 aa)) form the GST N-terminal domain. N6-succinyllysine is present on K4. Glutathione-binding positions include Y9, R45, 54–55 (QV), and 67–68 (QT). Residues 85 to 207 (DMKERALIDM…LQPGSQRKPL (123 aa)) enclose the GST C-terminal domain.

The protein belongs to the GST superfamily. Alpha family. In terms of assembly, heterodimer of YC1 and YC2.

It is found in the cytoplasm. It carries out the reaction RX + glutathione = an S-substituted glutathione + a halide anion + H(+). The catalysed reaction is androst-5-ene-3,17-dione = androst-4-ene-3,17-dione. It catalyses the reaction pregn-5-ene-3,20-dione = progesterone. Its function is as follows. Conjugation of reduced glutathione to a wide number of exogenous and endogenous hydrophobic electrophiles. Catalyzes isomerization reactions that contribute to the biosynthesis of steroid hormones. Efficiently catalyze obligatory double-bond isomerizations of delta(5)-androstene-3,17-dione and delta(5)-pregnene-3,20-dione, precursors to testosterone and progesterone, respectively. Has substantial activity toward aflatoxin B1-8,9-epoxide. The chain is Glutathione S-transferase alpha-3 from Rattus norvegicus (Rat).